A 359-amino-acid polypeptide reads, in one-letter code: Peptide chain release factor 1 (359 aa).

Glutamine 233 bears the N5-methylglutamine mark.

This sequence belongs to the prokaryotic/mitochondrial release factor family. In terms of processing, methylated by PrmC. Methylation increases the termination efficiency of RF1.

Its subcellular location is the cytoplasm. Functionally, peptide chain release factor 1 directs the termination of translation in response to the peptide chain termination codons UAG and UAA. This chain is Peptide chain release factor 1, found in Orientia tsutsugamushi (strain Boryong) (Rickettsia tsutsugamushi).